The primary structure comprises 145 residues: Histone H2B.1, sperm (145 aa).

The interval 1–52 (MPSQKSPTKRSPTKRSPTKRSPQKGGKGGKGAKRGGKAGKRRRGVQVKRRRR) is disordered. 4 short sequence motifs (SPKK motif) span residues 6 to 9 (SPTK), 11 to 14 (SPTK), 16 to 19 (SPTK), and 21 to 24 (SPQK). Composition is skewed to basic residues over residues 7 to 22 (PTKR…KRSP) and 30 to 52 (KGAK…RRRR). Phosphoserine occurs at positions 16 and 21. O-linked (GlcNAc) serine glycosylation is present at S132. K140 participates in a covalent cross-link: Glycyl lysine isopeptide (Lys-Gly) (interchain with G-Cter in ubiquitin).

The protein belongs to the histone H2B family. In terms of assembly, the nucleosome is a histone octamer containing two molecules each of H2A, H2B, H3 and H4 assembled in one H3-H4 heterotetramer and two H2A-H2B heterodimers. The octamer wraps approximately 147 bp of DNA. Post-translationally, monoubiquitination of Lys-140 gives a specific tag for epigenetic transcriptional activation and is also prerequisite for histone H3 'Lys-4' and 'Lys-79' methylation. Phosphorylated on SPKK motifs 3 and 4; which may regulate DNA binding. Dephosphorylated during maturation of spermatids to mature sperm and rephosphorylated at fertilization. In terms of processing, glcNAcylation at Ser-132 promotes monoubiquitination of Lys-140. It fluctuates in response to extracellular glucose, and associates with transcribed genes.

It localises to the nucleus. The protein localises to the chromosome. Core component of nucleosome. Nucleosomes wrap and compact DNA into chromatin, limiting DNA accessibility to the cellular machineries which require DNA as a template. Histones thereby play a central role in transcription regulation, DNA repair, DNA replication and chromosomal stability. DNA accessibility is regulated via a complex set of post-translational modifications of histones, also called histone code, and nucleosome remodeling. The protein is Histone H2B.1, sperm of Parechinus angulosus (Angulate sea urchin).